The sequence spans 618 residues: MLPEHLARISRRYVILLALVGLYVCYLFLPRWLVLACGLRRTLLSCHTCFLCEIVIPSHSTQHTSRNDKVKAWCLTSEYSLIGWYAFSGEMCAVINEWKGGEGFGIGRCFFKWRSDDVWRVEVVREYDWYGRIISRSIRDGAGSYRYQSRSDRDRSCFHHVFHHCPSAFYHLACANLVRSCGDLRWIGMANLNLYTVTAICVRWRVTKPLTGARITAVLCTRALEFIWYRLKRVRPASLFHQLFHHLRRPFWNLLRQTGCPAVAGRTRIGMAKSYICLVLPRNAAVGGGCLDDIIDPQNNKQSPGSSEMEAAFAVTKAAANRASCRKIPMLHIGVSWGCRSIRRIPEFIYVIVLLILSTKHKQIAVLNRPKDRCEASVGIILDPREFVIMSWLFPVSNSVIRSQFHTTYRAGKHKVNTWCSHLIALASLRGFINFSVIYHGSSLNENYQKSQDAGEHAVLLLYSPGPMAQQHCGIVAQEGGDVCGGLYARACLGDRSLTVQRLSDYRVSYQRLRLLEQLRAGRILATALGAKLPRRDAACAGCVAHGVGGDVWRRVLVRAACWRQISYSAAIVNLMWWRSHDDEYSYYARLDCSSRLFCWGHVRKIPEWVICHSFLYY.

Functionally, bacterial hemolysins are exotoxins that attack blood cell membranes and cause cell rupture by mechanisms not clearly defined. The sequence is that of Citrolysin protein 1 from Citrobacter freundii.